Here is a 276-residue protein sequence, read N- to C-terminus: MALLSFERKYRVRGGTLIGGDLFDFWVGPFYVGFFGVTTLLFTVLGTALIVWGAALGPSWTFWQISINPPDVSYGLAMAPMAKGGLWQIITFSAIGAFVSWALREVEICRKLGIGYHIPFAFGFAILAYVSLVVIRPVMMGAWGYGFPYGFMTHLDWVSNTGYQYANFHYNPAHMLGITLFFTTCLALALHGSLILSAANPGKGEVVKGPEHENTYFQDTIGYSVGTLGIHRVGLILALSAVVWSIICMILSGPIYTGSWPDWWLWWQKLPFWNHG.

3 consecutive transmembrane segments (helical) span residues 33-56 (GFFGVTTLLFTVLGTALIVWGAAL), 85-113 (GLWQIITFSAIGAFVSWALREVEICRKLG), and 116-141 (YHIPFAFGFAILAYVSLVVIRPVMMG). Histidine 154 and histidine 174 together coordinate (7R,8Z)-bacteriochlorophyll b. The helical transmembrane segment at 171–200 (NPAHMLGITLFFTTCLALALHGSLILSAAN) threads the bilayer. Histidine 191 provides a ligand contact to Fe cation. Phenylalanine 217 provides a ligand contact to a ubiquinone. The helical transmembrane segment at 226–252 (GTLGIHRVGLILALSAVVWSIICMILS) threads the bilayer. Histidine 231 is a binding site for Fe cation.

This sequence belongs to the reaction center PufL/M/PsbA/D family. Reaction center is composed of four bacteriochlorophylls, two bacteriopheophytins, two ubiquinones, one iron, and three highly hydrophobic polypeptide chains (designated L, M, and H).

It localises to the cellular chromatophore membrane. In terms of biological role, the reaction center is a membrane-bound complex that mediates the initial photochemical event in the electron transfer process of photosynthesis. This Rhodospirillum rubrum protein is Reaction center protein L chain (pufL).